Reading from the N-terminus, the 410-residue chain is Lipoyl synthase, mitochondrial (410 aa).

Residues C134, C139, C145, C165, C169, C172, and S390 each coordinate [4Fe-4S] cluster. Residues A148–L379 form the Radical SAM core domain.

The protein belongs to the radical SAM superfamily. Lipoyl synthase family. It depends on [4Fe-4S] cluster as a cofactor.

The protein resides in the mitochondrion. It catalyses the reaction [[Fe-S] cluster scaffold protein carrying a second [4Fe-4S](2+) cluster] + N(6)-octanoyl-L-lysyl-[protein] + 2 oxidized [2Fe-2S]-[ferredoxin] + 2 S-adenosyl-L-methionine + 4 H(+) = [[Fe-S] cluster scaffold protein] + N(6)-[(R)-dihydrolipoyl]-L-lysyl-[protein] + 4 Fe(3+) + 2 hydrogen sulfide + 2 5'-deoxyadenosine + 2 L-methionine + 2 reduced [2Fe-2S]-[ferredoxin]. Its pathway is protein modification; protein lipoylation via endogenous pathway; protein N(6)-(lipoyl)lysine from octanoyl-[acyl-carrier-protein]: step 2/2. Catalyzes the radical-mediated insertion of two sulfur atoms into the C-6 and C-8 positions of the octanoyl moiety bound to the lipoyl domains of lipoate-dependent enzymes, thereby converting the octanoylated domains into lipoylated derivatives. The sequence is that of Lipoyl synthase, mitochondrial from Schistosoma mansoni (Blood fluke).